The following is a 435-amino-acid chain: Methylenetetrahydrofolate--tRNA-(uracil-5-)-methyltransferase TrmFO (435 aa).

Residue 10–15 (GAGLAG) participates in FAD binding.

This sequence belongs to the MnmG family. TrmFO subfamily. FAD is required as a cofactor.

It localises to the cytoplasm. It catalyses the reaction uridine(54) in tRNA + (6R)-5,10-methylene-5,6,7,8-tetrahydrofolate + NADH + H(+) = 5-methyluridine(54) in tRNA + (6S)-5,6,7,8-tetrahydrofolate + NAD(+). It carries out the reaction uridine(54) in tRNA + (6R)-5,10-methylene-5,6,7,8-tetrahydrofolate + NADPH + H(+) = 5-methyluridine(54) in tRNA + (6S)-5,6,7,8-tetrahydrofolate + NADP(+). Its function is as follows. Catalyzes the folate-dependent formation of 5-methyl-uridine at position 54 (M-5-U54) in all tRNAs. This is Methylenetetrahydrofolate--tRNA-(uracil-5-)-methyltransferase TrmFO from Halalkalibacterium halodurans (strain ATCC BAA-125 / DSM 18197 / FERM 7344 / JCM 9153 / C-125) (Bacillus halodurans).